We begin with the raw amino-acid sequence, 135 residues long: MNSQLVGILLSALLGVALGHRTRCYDCGGGPSNSCKQTVITCGEGERCGFLDRKPQPSSEQAKQPSATLSHHYPACVATHHCNQVAIESVGDVTFTTQKNCCFGDLCNSAVASSVTPLCILAAAVTTLAWLLPGL.

Positions 1-19 are cleaved as a signal peptide; sequence MNSQLVGILLSALLGVALG. In terms of domain architecture, UPAR/Ly6 spans 22–121; sequence TRCYDCGGGP…ASSVTPLCIL (100 aa). 5 disulfide bridges follow: Cys24-Cys48, Cys27-Cys35, Cys42-Cys76, Cys82-Cys101, and Cys102-Cys107. An O-linked (GalNAc...) threonine glycan is attached at Thr68. Asn108 is lipidated: GPI-anchor amidated asparagine. A propeptide spans 109-135 (removed in mature form); it reads SAVASSVTPLCILAAAVTTLAWLLPGL.

In terms of assembly, homodimer. In terms of processing, O-glycosylated. As to expression, expressed in embryonic tissue and adult lung, kidney, brain, liver and spleen.

It localises to the cell membrane. The protein localises to the cell projection. Its subcellular location is the filopodium. The sequence is that of Lymphocyte antigen 6 complex locus protein G6d (Ly6g6d) from Mus musculus (Mouse).